A 171-amino-acid chain; its full sequence is Pro-corazonin (171 aa).

Residues 1-20 (MLHTRTIALLLVGLVVLVNA) form the signal peptide. A Pyrrolidone carboxylic acid modification is found at Q21. N31 bears the Asparagine amide mark. A propeptide spanning residues 82-171 (FLRNPCDLRV…GFSDHRQKIA (90 aa)) is cleaved from the precursor.

The protein belongs to the corazonin family.

The protein localises to the secreted. Cardioactive peptide. Corazonin is probably involved in the physiological regulation of the heart beat. This is Pro-corazonin from Anopheles gambiae (African malaria mosquito).